A 471-amino-acid polypeptide reads, in one-letter code: Citrate synthase, mitochondrial (471 aa).

The transit peptide at 1 to 18 (MASLRSATALSRLRSRAG) directs the protein to the mitochondrion. Catalysis depends on residues histidine 307, histidine 353, and aspartate 408.

This sequence belongs to the citrate synthase family. In terms of assembly, homodimer.

It is found in the mitochondrion matrix. It catalyses the reaction oxaloacetate + acetyl-CoA + H2O = citrate + CoA + H(+). The protein operates within carbohydrate metabolism; tricarboxylic acid cycle; isocitrate from oxaloacetate: step 1/2. In Citrus maxima (Pomelo), this protein is Citrate synthase, mitochondrial (CIT).